A 251-amino-acid polypeptide reads, in one-letter code: Hydroxyacylglutathione hydrolase (251 aa).

Residues histidine 53, histidine 55, aspartate 57, histidine 58, histidine 110, aspartate 127, and histidine 165 each coordinate Zn(2+).

It belongs to the metallo-beta-lactamase superfamily. Glyoxalase II family. In terms of assembly, monomer. Zn(2+) serves as cofactor.

The enzyme catalyses an S-(2-hydroxyacyl)glutathione + H2O = a 2-hydroxy carboxylate + glutathione + H(+). Its pathway is secondary metabolite metabolism; methylglyoxal degradation; (R)-lactate from methylglyoxal: step 2/2. Functionally, thiolesterase that catalyzes the hydrolysis of S-D-lactoyl-glutathione to form glutathione and D-lactic acid. The polypeptide is Hydroxyacylglutathione hydrolase (Escherichia coli O17:K52:H18 (strain UMN026 / ExPEC)).